Here is a 323-residue protein sequence, read N- to C-terminus: o-succinylbenzoate synthase (323 aa).

The Proton donor role is filled by Lys134. Asp162, Glu191, and Asp214 together coordinate Mg(2+). The active-site Proton acceptor is the Lys236.

It belongs to the mandelate racemase/muconate lactonizing enzyme family. MenC type 1 subfamily. The cofactor is a divalent metal cation.

The catalysed reaction is (1R,6R)-6-hydroxy-2-succinyl-cyclohexa-2,4-diene-1-carboxylate = 2-succinylbenzoate + H2O. It participates in quinol/quinone metabolism; 1,4-dihydroxy-2-naphthoate biosynthesis; 1,4-dihydroxy-2-naphthoate from chorismate: step 4/7. Its pathway is quinol/quinone metabolism; menaquinone biosynthesis. Functionally, converts 2-succinyl-6-hydroxy-2,4-cyclohexadiene-1-carboxylate (SHCHC) to 2-succinylbenzoate (OSB). The sequence is that of o-succinylbenzoate synthase from Yersinia pseudotuberculosis serotype O:3 (strain YPIII).